The sequence spans 340 residues: MRVLGIETSCDETGIAIYDDKAGLLANQLYSQIKLHADYGGVVPELASRDHIRKTVPLIQAALKEANLTAKDIDAVAYTAGPGLVGALLVGATIGRSLAFAWDVPAIPVHHMEGHLLAPMLEEKTPDFPFVALLVSGGHTQLISVTGIGEYTLLGESIDDAAGEAFDKTAKLLGLDYPGGPVLSKMAQQGVEGRFVFPRPMTDRPGLDFSFSGLKTFAANTIRQNDDSEQTRADIARAFEDAVVDTLAIKCRRALEQTGFKRLVMAGGVSANRTLRAKMAMIMEQLGGEVFYARPELCTDNGAMIALAGMIRFKGGTEGPLGVTVRPRWPLAELPALADK.

2 residues coordinate Fe cation: His111 and His115. Substrate-binding positions include 134–138 (LVSGG), Asp167, Gly180, and Asn272. Fe cation is bound at residue Asp300.

Belongs to the KAE1 / TsaD family. It depends on Fe(2+) as a cofactor.

Its subcellular location is the cytoplasm. It catalyses the reaction L-threonylcarbamoyladenylate + adenosine(37) in tRNA = N(6)-L-threonylcarbamoyladenosine(37) in tRNA + AMP + H(+). In terms of biological role, required for the formation of a threonylcarbamoyl group on adenosine at position 37 (t(6)A37) in tRNAs that read codons beginning with adenine. Is involved in the transfer of the threonylcarbamoyl moiety of threonylcarbamoyl-AMP (TC-AMP) to the N6 group of A37, together with TsaE and TsaB. TsaD likely plays a direct catalytic role in this reaction. This is tRNA N6-adenosine threonylcarbamoyltransferase from Proteus mirabilis (strain HI4320).